Reading from the N-terminus, the 394-residue chain is Chorismate synthase (394 aa).

2 residues coordinate NADP(+): Arg40 and Arg46. Residues 135-137 (RAS) and 255-256 (QA) each bind FMN. Positions 270 to 291 (RRRGSGAHDEIEPAGAGSRRVR) are disordered. Residues Gly302, 317-321 (KPISS), and Arg343 each bind FMN.

The protein belongs to the chorismate synthase family. In terms of assembly, homotetramer. The cofactor is FMNH2.

It catalyses the reaction 5-O-(1-carboxyvinyl)-3-phosphoshikimate = chorismate + phosphate. Its pathway is metabolic intermediate biosynthesis; chorismate biosynthesis; chorismate from D-erythrose 4-phosphate and phosphoenolpyruvate: step 7/7. Its function is as follows. Catalyzes the anti-1,4-elimination of the C-3 phosphate and the C-6 proR hydrogen from 5-enolpyruvylshikimate-3-phosphate (EPSP) to yield chorismate, which is the branch point compound that serves as the starting substrate for the three terminal pathways of aromatic amino acid biosynthesis. This reaction introduces a second double bond into the aromatic ring system. This chain is Chorismate synthase, found in Frankia casuarinae (strain DSM 45818 / CECT 9043 / HFP020203 / CcI3).